The following is a 205-amino-acid chain: uncharacterized protein (205 aa).

Residues 5-27 form a helical membrane-spanning segment; it reads IIVLFIIHFIMINENVFIALLHY.

The protein to T.maritima TM1570.

Its subcellular location is the membrane. This is an uncharacterized protein from Aquifex aeolicus (strain VF5).